Consider the following 310-residue polypeptide: Fe-S cluster assembly protein dre2 (310 aa).

Disordered stretches follow at residues 1–30 and 165–184; these read MAPS…GKRT and APAP…DDND. Residues 24 to 154 are N-terminal SAM-like domain; it reads ADSGKRTLLL…KMDVGNGAAV (131 aa). Residues 155 to 202 are linker; it reads PLRLGRKKKAAPAPAPVVQPPPIISSDDNDLNDDELIDEDTLLSADDL. A compositionally biased stretch (pro residues) spans 167–177; sequence APAPVVQPPPI. Residues cysteine 212, cysteine 223, cysteine 226, and cysteine 228 each coordinate [2Fe-2S] cluster. The tract at residues 212 to 228 is fe-S binding site A; that stretch reads CQPKAGKRRRACKDCTC. [4Fe-4S] cluster is bound by residues cysteine 273, cysteine 276, cysteine 284, and cysteine 287. 2 short sequence motifs (cx2C motif) span residues 273–276 and 284–287; these read CGNC and CDGC. Residues 273-287 are fe-S binding site B; the sequence is CGNCALGDAFRCDGC.

The protein belongs to the anamorsin family. As to quaternary structure, monomer. Interacts with tah18. Interacts with mia40. [2Fe-2S] cluster serves as cofactor. Requires [4Fe-4S] cluster as cofactor.

The protein localises to the cytoplasm. The protein resides in the mitochondrion intermembrane space. Component of the cytosolic iron-sulfur (Fe-S) protein assembly (CIA) machinery required for the maturation of extramitochondrial Fe-S proteins. Part of an electron transfer chain functioning in an early step of cytosolic Fe-S biogenesis, facilitating the de novo assembly of a [4Fe-4S] cluster on the scaffold complex cfd1-nbp35. Electrons are transferred to dre2 from NADPH via the FAD- and FMN-containing protein tah18. Tah18-dre2 are also required for the assembly of the diferric tyrosyl radical cofactor of ribonucleotide reductase (RNR), probably by providing electrons for reduction during radical cofactor maturation in the catalytic small subunit rnr2. This chain is Fe-S cluster assembly protein dre2, found in Emericella nidulans (strain FGSC A4 / ATCC 38163 / CBS 112.46 / NRRL 194 / M139) (Aspergillus nidulans).